Here is a 389-residue protein sequence, read N- to C-terminus: tRNA-specific 2-thiouridylase MnmA (389 aa).

ATP contacts are provided by residues Gly35–Ser42 and Met61. An interaction with target base in tRNA region spans residues Asn121–Asp123. The Nucleophile role is filled by Cys126. Cys126 and Cys223 are disulfide-bonded. Residue Gly151 coordinates ATP. The interval Lys173–Gln175 is interaction with tRNA. Cys223 acts as the Cysteine persulfide intermediate in catalysis. The segment at Arg335–Tyr336 is interaction with tRNA.

Belongs to the MnmA/TRMU family.

Its subcellular location is the cytoplasm. It catalyses the reaction S-sulfanyl-L-cysteinyl-[protein] + uridine(34) in tRNA + AH2 + ATP = 2-thiouridine(34) in tRNA + L-cysteinyl-[protein] + A + AMP + diphosphate + H(+). In terms of biological role, catalyzes the 2-thiolation of uridine at the wobble position (U34) of tRNA, leading to the formation of s(2)U34. This Actinobacillus pleuropneumoniae serotype 3 (strain JL03) protein is tRNA-specific 2-thiouridylase MnmA.